The primary structure comprises 347 residues: NADH-quinone oxidoreductase subunit H (347 aa).

8 consecutive transmembrane segments (helical) span residues 25–45, 95–115, 128–148, 168–188, 200–220, 251–271, 284–304, and 324–344; these read ILFMVVQSLVIFLVVVIVAAM, FMFTLAPAVAMFTALASFAII, IGILFFFAMAGIAVYAVLFGG, ISYEVFLGLSLMGVVALTGSF, GWYIIPQFFGFLTFVVAGVAV, FFIGEYVNVVLISALMTCLFF, FIPPAFWFMIKTLFFMTMFIL, and VCLPVTLINLLVTAAVILIFS.

It belongs to the complex I subunit 1 family. As to quaternary structure, NDH-1 is composed of 14 different subunits. Subunits NuoA, H, J, K, L, M, N constitute the membrane sector of the complex.

It is found in the cell inner membrane. The catalysed reaction is a quinone + NADH + 5 H(+)(in) = a quinol + NAD(+) + 4 H(+)(out). Functionally, NDH-1 shuttles electrons from NADH, via FMN and iron-sulfur (Fe-S) centers, to quinones in the respiratory chain. The immediate electron acceptor for the enzyme in this species is believed to be ubiquinone. Couples the redox reaction to proton translocation (for every two electrons transferred, four hydrogen ions are translocated across the cytoplasmic membrane), and thus conserves the redox energy in a proton gradient. This subunit may bind ubiquinone. In Psychrobacter arcticus (strain DSM 17307 / VKM B-2377 / 273-4), this protein is NADH-quinone oxidoreductase subunit H.